Reading from the N-terminus, the 367-residue chain is Aspartate-semialdehyde dehydrogenase (367 aa).

NADP(+)-binding positions include 10–13 (RGMV), 37–38 (TS), and Gln73. A phosphate-binding site is contributed by Arg102. Residue Cys135 is the Acyl-thioester intermediate of the active site. The residue at position 135 (Cys135) is an S-cysteinyl cysteine; in inhibited form. Gln162 contacts substrate. NADP(+) is bound by residues 165–169 (SGGGA), Arg173, and Pro193. Glu241 serves as a coordination point for substrate. Lys244 serves as a coordination point for phosphate. Arg267 provides a ligand contact to substrate. The active-site Proton acceptor is the His274. Residue Gln350 participates in NADP(+) binding.

This sequence belongs to the aspartate-semialdehyde dehydrogenase family. As to quaternary structure, homodimer.

It carries out the reaction L-aspartate 4-semialdehyde + phosphate + NADP(+) = 4-phospho-L-aspartate + NADPH + H(+). The protein operates within amino-acid biosynthesis; L-lysine biosynthesis via DAP pathway; (S)-tetrahydrodipicolinate from L-aspartate: step 2/4. It participates in amino-acid biosynthesis; L-methionine biosynthesis via de novo pathway; L-homoserine from L-aspartate: step 2/3. It functions in the pathway amino-acid biosynthesis; L-threonine biosynthesis; L-threonine from L-aspartate: step 2/5. Is inhibited by L- and D-cystine, and by other cystine derivatives, via the formation of a covalently bound cysteine at the active site Cys-135. Catalyzes the NADPH-dependent formation of L-aspartate-semialdehyde (L-ASA) by the reductive dephosphorylation of L-aspartyl-4-phosphate. The chain is Aspartate-semialdehyde dehydrogenase from Escherichia coli (strain K12).